We begin with the raw amino-acid sequence, 391 residues long: Elongation factor Tu (391 aa).

Residues 10–201 form the tr-type G domain; sequence KPHVNIGTIG…AVDAYIPTPE (192 aa). Residues 19–26 form a G1 region; that stretch reads GHVDHGKT. GTP is bound at residue 19 to 26; it reads GHVDHGKT. Threonine 26 is a Mg(2+) binding site. Residues 55 to 59 are G2; it reads GITIS. Residues 76–79 are G3; that stretch reads DCPG. Residues 76–80 and 131–134 each bind GTP; these read DCPGH and NKVD. The G4 stretch occupies residues 131-134; that stretch reads NKVD. Residues 169–171 form a G5 region; it reads SAL.

It belongs to the TRAFAC class translation factor GTPase superfamily. Classic translation factor GTPase family. EF-Tu/EF-1A subfamily. As to quaternary structure, monomer.

Its subcellular location is the cytoplasm. It carries out the reaction GTP + H2O = GDP + phosphate + H(+). GTP hydrolase that promotes the GTP-dependent binding of aminoacyl-tRNA to the A-site of ribosomes during protein biosynthesis. The protein is Elongation factor Tu of Rhizobium johnstonii (strain DSM 114642 / LMG 32736 / 3841) (Rhizobium leguminosarum bv. viciae).